The sequence spans 193 residues: dCTP deaminase (193 aa).

DCTP-binding positions include 110 to 115 (RSSLAR), Asp128, 136 to 138 (VLE), Tyr171, Lys178, and Gln182. Glu138 acts as the Proton donor/acceptor in catalysis. The interval 169–193 (RPYNSRQDAKYKGQQGAVASRIDKD) is disordered.

This sequence belongs to the dCTP deaminase family. As to quaternary structure, homotrimer.

It catalyses the reaction dCTP + H2O + H(+) = dUTP + NH4(+). Its pathway is pyrimidine metabolism; dUMP biosynthesis; dUMP from dCTP (dUTP route): step 1/2. In terms of biological role, catalyzes the deamination of dCTP to dUTP. This Erwinia tasmaniensis (strain DSM 17950 / CFBP 7177 / CIP 109463 / NCPPB 4357 / Et1/99) protein is dCTP deaminase.